A 450-amino-acid polypeptide reads, in one-letter code: 23S rRNA (uracil(1939)-C(5))-methyltransferase RlmD (450 aa).

In terms of domain architecture, TRAM spans S12–K70. Residues C83, C89, C92, and C171 each contribute to the [4Fe-4S] cluster site. Q283, F312, N317, E333, D360, and D380 together coordinate S-adenosyl-L-methionine. C406 (nucleophile) is an active-site residue.

This sequence belongs to the class I-like SAM-binding methyltransferase superfamily. RNA M5U methyltransferase family. RlmD subfamily.

The enzyme catalyses uridine(1939) in 23S rRNA + S-adenosyl-L-methionine = 5-methyluridine(1939) in 23S rRNA + S-adenosyl-L-homocysteine + H(+). In terms of biological role, catalyzes the formation of 5-methyl-uridine at position 1939 (m5U1939) in 23S rRNA. The protein is 23S rRNA (uracil(1939)-C(5))-methyltransferase RlmD of Shewanella sp. (strain W3-18-1).